Reading from the N-terminus, the 394-residue chain is NAD(P)H-quinone oxidoreductase subunit H (394 aa).

This sequence belongs to the complex I 49 kDa subunit family. As to quaternary structure, NDH-1 can be composed of about 15 different subunits; different subcomplexes with different compositions have been identified which probably have different functions.

The protein localises to the cellular thylakoid membrane. It catalyses the reaction a plastoquinone + NADH + (n+1) H(+)(in) = a plastoquinol + NAD(+) + n H(+)(out). The catalysed reaction is a plastoquinone + NADPH + (n+1) H(+)(in) = a plastoquinol + NADP(+) + n H(+)(out). Its function is as follows. NDH-1 shuttles electrons from an unknown electron donor, via FMN and iron-sulfur (Fe-S) centers, to quinones in the respiratory and/or the photosynthetic chain. The immediate electron acceptor for the enzyme in this species is believed to be plastoquinone. Couples the redox reaction to proton translocation, and thus conserves the redox energy in a proton gradient. Cyanobacterial NDH-1 also plays a role in inorganic carbon-concentration. This chain is NAD(P)H-quinone oxidoreductase subunit H, found in Synechococcus sp. (strain JA-3-3Ab) (Cyanobacteria bacterium Yellowstone A-Prime).